Consider the following 127-residue polypeptide: Gamma-synuclein (127 aa).

2 consecutive repeat copies span residues E20 to A30 and E31 to G41. A 4 X 11 AA tandem repeats of [EGSA]-K-T-K-[EQ]-[GQ]-V-X(4) region spans residues E20–S67. One copy of the 3; approximate repeat lies at T42 to A56. Repeat 4 spans residues E57–S67. Phosphoserine occurs at positions 67 and 72. Residues K97–D127 form a disordered region. Position 124 is a phosphoserine; by BARK1, CaMK2 and CK2 (S124).

The protein belongs to the synuclein family. May be a centrosome-associated protein. Interacts with MYOC; affects its secretion and its aggregation. In terms of processing, phosphorylated. Phosphorylation by GRK5 appears to occur on residues distinct from the residue phosphorylated by other kinases.

Its subcellular location is the cytoplasm. The protein resides in the perinuclear region. The protein localises to the cytoskeleton. It localises to the microtubule organizing center. It is found in the centrosome. Its subcellular location is the spindle. In terms of biological role, plays a role in neurofilament network integrity. May be involved in modulating axonal architecture during development and in the adult. In vitro, increases the susceptibility of neurofilament-H to calcium-dependent proteases. May also function in modulating the keratin network in skin. Activates the MAPK and Elk-1 signal transduction pathway. The protein is Gamma-synuclein (SNCG) of Macaca fascicularis (Crab-eating macaque).